The sequence spans 324 residues: E3 ubiquitin-protein ligase SIAH2 (324 aa).

The segment covering 1 to 15 has biased composition (polar residues); it reads MSRPSSTGPSANKPC. Residues 1–42 are disordered; it reads MSRPSSTGPSANKPCSKQPPPQPQHTPSPAAPPAAATISAAG. Ser-6 carries the post-translational modification Phosphoserine. Ser-16 carries the post-translational modification Phosphoserine; by DYRK2. Residues 17-32 are compositionally biased toward pro residues; the sequence is KQPPPQPQHTPSPAAP. At Thr-26 the chain carries Phosphothreonine; by DYRK2. Ser-28 is modified (phosphoserine; by DYRK2 and MAPK14). Positions 33 to 42 are enriched in low complexity; the sequence is PAAATISAAG. Ser-68 carries the phosphoserine; by DYRK2 modification. The segment at 80–115 adopts an RING-type zinc-finger fold; the sequence is CPVCFDYVLPPILQCQAGHLVCNQCRQKLSCCPTCR. A Phosphothreonine; by DYRK2 modification is found at Thr-119. Residues 130 to 322 are SBD; it reads VASAVLFPCK…LGINVTISTC (193 aa). Residues 133–193 form an SIAH-type zinc finger; it reads AVLFPCKYAT…VMSHLMHAHK (61 aa). Residues Cys-138, Cys-145, His-157, Cys-161, Cys-168, Cys-175, His-187, and His-192 each contribute to the Zn(2+) site.

The protein belongs to the SINA (Seven in absentia) family. As to quaternary structure, homodimer. Interacts with UBE2E2. Interacts with PEG3. Interacts with VAV1, without mediating its ubiquitin-mediated degradation. Interacts with CACYBP/SIP. Probable component of some large E3 complex possibly composed of UBE2D1, SIAH2, CACYBP/SIP, SKP1, APC and TBL1X. Interacts with PEG10, which may inhibit its activity. Interacts with EGLN2 and SNCAIP. Interacts with DYRK2. Interacts with NR1D1 and NR1D2. Interacts with DCC. Interacts with AXIN1. Post-translationally, phosphorylated at Ser-28 by MAPK14, which mediates the degradation by the proteasome of EGLN3. Phosphorylated at Ser-28 by DYRK2; this increases the ubiquitin ligase activity and promotes degradation of EGLN3. Widely expressed at low level.

It localises to the cytoplasm. Its subcellular location is the nucleus. The enzyme catalyses S-ubiquitinyl-[E2 ubiquitin-conjugating enzyme]-L-cysteine + [acceptor protein]-L-lysine = [E2 ubiquitin-conjugating enzyme]-L-cysteine + N(6)-ubiquitinyl-[acceptor protein]-L-lysine.. It functions in the pathway protein modification; protein ubiquitination. With respect to regulation, inhibited by interaction with SNCAIP (isoform 2, but not isoform 1). May be inhibited by interaction with PEG10. E3 ubiquitin-protein ligase that mediates ubiquitination and subsequent proteasomal degradation of target proteins. E3 ubiquitin ligases accept ubiquitin from an E2 ubiquitin-conjugating enzyme in the form of a thioester and then directly transfers the ubiquitin to targeted substrates. Mediates E3 ubiquitin ligase activity either through direct binding to substrates or by functioning as the essential RING domain subunit of larger E3 complexes. Triggers the ubiquitin-mediated degradation of many substrates, including proteins involved in transcription regulation (GPS2, POU2AF1, PML, NCOR1), a cell surface receptor (DCC), an antiapoptotic protein (BAG1), and a protein involved in synaptic vesicle function in neurons (SYP). Mediates ubiquitination and proteasomal degradation of DYRK2 in response to hypoxia. It is thereby involved in apoptosis, tumor suppression, cell cycle, transcription and signaling processes. Has some overlapping function with SIAH1. Triggers the ubiquitin-mediated degradation of TRAF2, whereas SIAH1 does not. Promotes monoubiquitination of SNCA. Regulates cellular clock function via ubiquitination of the circadian transcriptional repressors NR1D1 and NR1D2 leading to their proteasomal degradation. Plays an important role in mediating the rhythmic degradation/clearance of NR1D1 and NR1D2 contributing to their circadian profile of protein abundance. Mediates ubiquitination and degradation of EGLN2 and EGLN3 in response to the unfolded protein response (UPR), leading to their degradation and subsequent stabilization of ATF4. Also part of the Wnt signaling pathway in which it mediates the Wnt-induced ubiquitin-mediated proteasomal degradation of AXIN1. This Homo sapiens (Human) protein is E3 ubiquitin-protein ligase SIAH2 (SIAH2).